The chain runs to 369 residues: MSDAKLQSVLSSLSQVARQLDALPSDTPAPDSSWVKLNTNENPFPLPEIIMQSAIAALERQYLYPEDDNISLREAAANAYSVSMDQVIAGNGSSELLGLVYRAFLTPGDSVAMMSPGFSFNRKLATLQGAQFVEIEFSKDHSLPMEQLLFGPAKDAKFILLANPNNPTGTFVPVADIERLVAKSDRLIVLDEAYVDFAPENGLRLINRYSNLLVLRTFSKSYAAAGVRVGFGFGHPEIIGRLRNIQNVFNMNVIGQAVGISVLAHRAAYADNHRHIRHERRRVTLALSQLGFSVIPSHANFLLARVPTAQDGSWWQSAFARQKILVAVFPDKGLENYIRVSIGTKEQMDAFLRAASRISRILNMSTPPR.

N6-(pyridoxal phosphate)lysine is present on Lys220.

Belongs to the class-II pyridoxal-phosphate-dependent aminotransferase family. Histidinol-phosphate aminotransferase subfamily. As to quaternary structure, homodimer. Pyridoxal 5'-phosphate is required as a cofactor.

The catalysed reaction is L-histidinol phosphate + 2-oxoglutarate = 3-(imidazol-4-yl)-2-oxopropyl phosphate + L-glutamate. Its pathway is amino-acid biosynthesis; L-histidine biosynthesis; L-histidine from 5-phospho-alpha-D-ribose 1-diphosphate: step 7/9. The sequence is that of Histidinol-phosphate aminotransferase 3 (hisC3) from Mesorhizobium japonicum (strain LMG 29417 / CECT 9101 / MAFF 303099) (Mesorhizobium loti (strain MAFF 303099)).